The sequence spans 1101 residues: Selenocysteine insertion sequence-binding protein 2-like (1101 aa).

Disordered regions lie at residues Leu-154–Asp-206, Leu-240–Gly-295, Gln-320–Leu-387, Thr-884–Glu-1010, and Thr-1030–Thr-1101. Residues Ala-255–Glu-265 are compositionally biased toward low complexity. Ser-276 carries the phosphoserine modification. The span at Lys-327–Val-346 shows a compositional bias: polar residues. 2 stretches are compositionally biased toward basic and acidic residues: residues Ser-356–His-371 and Glu-892–Ser-908. The span at Ala-925–Thr-939 shows a compositional bias: low complexity. Residues Ala-940–Asp-950 are compositionally biased toward basic and acidic residues. Residues Ala-954–Leu-964 are compositionally biased toward polar residues. Over residues Leu-988–Tyr-1002 the composition is skewed to acidic residues. Positions Thr-1030–Gly-1039 are enriched in polar residues. Residues Ser-1040–Glu-1057 are compositionally biased toward acidic residues. The span at Ala-1070–Leu-1087 shows a compositional bias: polar residues.

Binds SECIS (Sec insertion sequence) elements present on selenocysteine (Sec) protein mRNAs, but does not promote Sec incorporation into selenoproteins in vitro. The chain is Selenocysteine insertion sequence-binding protein 2-like (SECISBP2L) from Homo sapiens (Human).